Reading from the N-terminus, the 303-residue chain is Cilia- and flagella-associated protein 161 (303 aa).

In terms of assembly, microtubule inner protein component of sperm flagellar doublet microtubules.

Its subcellular location is the cytoplasm. It localises to the cytoskeleton. The protein localises to the cilium axoneme. It is found in the flagellum axoneme. Its function is as follows. Microtubule inner protein (MIP) part of the dynein-decorated doublet microtubules (DMTs) in cilia axoneme, which is required for motile cilia beating. The sequence is that of Cilia- and flagella-associated protein 161 from Mus musculus (Mouse).